Consider the following 91-residue polypeptide: RING finger protein Z (91 aa).

G2 carries N-myristoyl glycine; by host lipidation. The segment at 35 to 71 adopts an RING-type; atypical zinc-finger fold; the sequence is CKCCWFQDKNLVECSDHYLCLKCISSMLKRGKNCEIC. Residues 85 to 88 carry the PTAP/PSAP motif motif; the sequence is PTAP.

This sequence belongs to the arenaviridae Z protein family. As to quaternary structure, interacts with protein NP; this interaction probably directs the encapsidated genome to budding sites. Interacts (via RING domain) with polymerase L; this interaction inhibits viral transcription and replication, Z partially blocks the product exit tunnel for the releasing nascent RNA product. Interacts with the glycoprotein complex; this interaction plays a role in virion budding. Interacts with host eIF4E; this interaction results in eIF4E reduced affinity for its substrate, the 5'-m7 G cap structure. Interacts (via late-budding domain) with host TSG101; this interaction is essential for budding and release of viral particles. Interacts with host RPLP0; this interaction may serve to load ribosome-like particles inside the virion. Interacts with host PML; this interaction induces PML bodies redistribution in the cytoplasm upon viral infection. Post-translationally, myristoylation is required for the role of RING finger protein Z in assembly and budding.

It is found in the virion. The protein resides in the host cytoplasm. Its subcellular location is the host perinuclear region. The protein localises to the host cell membrane. Plays a crucial role in virion assembly and budding. Expressed late in the virus life cycle, it acts as an inhibitor of viral transcription and RNA synthesis by interacting with the viral polymerase L. Presumably recruits the NP encapsidated genome to cellular membranes at budding sites via direct interaction with NP. Plays critical roles in the final steps of viral release by interacting with host TSG101, a member of the vacuolar protein-sorting pathway and using other cellular host proteins involved in vesicle formation pathway. The budding of the virus progeny occurs after association of protein Z with the viral glycoprotein complex SSP-GP1-GP2 at the cell periphery, step that requires myristoylation of protein Z. Also selectively represses protein production by associating with host eIF4E. In cell-based minigenome assay, has an inhibitory effect on the ribonucleoprotein machinery (vRNP), which is responsible for the replication and transcription of the viral genome. This Latino mammarenavirus (isolate Rat/Bolivia/MARU 1924/1965) (LATV) protein is RING finger protein Z.